A 187-amino-acid polypeptide reads, in one-letter code: Adenylate kinase (187 aa).

10–15 (GSGKGT) is a binding site for ATP. Residues 30–59 (STGDLLRSEVVAGTPLGLQAKQVMAQGDLV) are NMP. AMP-binding positions include Thr-31, Arg-36, 57–59 (DLV), 85–88 (GYPR), and Gln-92. The tract at residues 126–136 (GRAQAEGREDD) is LID. ATP is bound at residue Arg-127. Residues Arg-133 and Arg-144 each coordinate AMP. Gly-172 provides a ligand contact to ATP.

This sequence belongs to the adenylate kinase family. In terms of assembly, monomer.

The protein resides in the cytoplasm. The catalysed reaction is AMP + ATP = 2 ADP. It participates in purine metabolism; AMP biosynthesis via salvage pathway; AMP from ADP: step 1/1. In terms of biological role, catalyzes the reversible transfer of the terminal phosphate group between ATP and AMP. Plays an important role in cellular energy homeostasis and in adenine nucleotide metabolism. The chain is Adenylate kinase from Xylella fastidiosa (strain 9a5c).